Consider the following 362-residue polypeptide: Phospho-N-acetylmuramoyl-pentapeptide-transferase (362 aa).

Helical transmembrane passes span 18–38, 73–93, 97–117, 134–154, 160–180, 200–220, 237–257, 264–284, 289–309, and 339–359; these read VFGY…AISL, TMGG…WGDL, YVWV…VDDW, YFWT…SATT, LIVP…FIAL, GLAI…AYVA, AGEL…FLWF, VFMG…IAVV, IVLF…MVQV, and QVVV…LSTL.

This sequence belongs to the glycosyltransferase 4 family. MraY subfamily. Mg(2+) is required as a cofactor.

The protein resides in the cell inner membrane. It catalyses the reaction UDP-N-acetyl-alpha-D-muramoyl-L-alanyl-gamma-D-glutamyl-meso-2,6-diaminopimeloyl-D-alanyl-D-alanine + di-trans,octa-cis-undecaprenyl phosphate = di-trans,octa-cis-undecaprenyl diphospho-N-acetyl-alpha-D-muramoyl-L-alanyl-D-glutamyl-meso-2,6-diaminopimeloyl-D-alanyl-D-alanine + UMP. It participates in cell wall biogenesis; peptidoglycan biosynthesis. Catalyzes the initial step of the lipid cycle reactions in the biosynthesis of the cell wall peptidoglycan: transfers peptidoglycan precursor phospho-MurNAc-pentapeptide from UDP-MurNAc-pentapeptide onto the lipid carrier undecaprenyl phosphate, yielding undecaprenyl-pyrophosphoryl-MurNAc-pentapeptide, known as lipid I. The polypeptide is Phospho-N-acetylmuramoyl-pentapeptide-transferase (Azoarcus sp. (strain BH72)).